The sequence spans 421 residues: Outer capsid protein P8 (421 aa).

This sequence belongs to the phytoreovirus outer capsid protein P8 family. In terms of assembly, homotrimer. Homomultimer. Interacts with host peroxisomal glycolate oxidase (GOX). This interaction mediates its relocation to virus factories peripheral to host peroxisomes.

The protein localises to the virion. It localises to the host cytoplasm. Its function is as follows. Capsid protein which self-assembles to form the outer icosahedral capsid with a T=13 symmetry, about 70 nm in diameter and consisting of 780 molecules capsid proteins. This Rice dwarf virus (isolate S) (RDV) protein is Outer capsid protein P8 (S8).